An 84-amino-acid polypeptide reads, in one-letter code: Large ribosomal subunit protein bL27 (84 aa).

The tract at residues 1 to 20 is disordered; that stretch reads MAHKKSGGASRNGRDSNPKY.

This sequence belongs to the bacterial ribosomal protein bL27 family.

This is Large ribosomal subunit protein bL27 from Dictyoglomus thermophilum (strain ATCC 35947 / DSM 3960 / H-6-12).